Consider the following 202-residue polypeptide: Putative 3-methyladenine DNA glycosylase (202 aa).

The protein belongs to the DNA glycosylase MPG family.

This chain is Putative 3-methyladenine DNA glycosylase, found in Staphylococcus aureus (strain MRSA252).